Reading from the N-terminus, the 216-residue chain is 3,4-dihydroxy-2-butanone 4-phosphate synthase (216 aa).

D-ribulose 5-phosphate is bound by residues 33 to 34 (RE), aspartate 38, 146 to 150 (RRGHT), and glutamate 170. Glutamate 34 is a Mg(2+) binding site. Histidine 149 contributes to the Mg(2+) binding site.

Belongs to the DHBP synthase family. In terms of assembly, homodimer. Requires Mg(2+) as cofactor. It depends on Mn(2+) as a cofactor.

The enzyme catalyses D-ribulose 5-phosphate = (2S)-2-hydroxy-3-oxobutyl phosphate + formate + H(+). Its pathway is cofactor biosynthesis; riboflavin biosynthesis; 2-hydroxy-3-oxobutyl phosphate from D-ribulose 5-phosphate: step 1/1. Functionally, catalyzes the conversion of D-ribulose 5-phosphate to formate and 3,4-dihydroxy-2-butanone 4-phosphate. This is 3,4-dihydroxy-2-butanone 4-phosphate synthase from Pseudomonas putida (strain ATCC 47054 / DSM 6125 / CFBP 8728 / NCIMB 11950 / KT2440).